The sequence spans 177 residues: ATP synthase subunit delta (177 aa).

The protein belongs to the ATPase delta chain family. As to quaternary structure, F-type ATPases have 2 components, F(1) - the catalytic core - and F(0) - the membrane proton channel. F(1) has five subunits: alpha(3), beta(3), gamma(1), delta(1), epsilon(1). F(0) has three main subunits: a(1), b(2) and c(10-14). The alpha and beta chains form an alternating ring which encloses part of the gamma chain. F(1) is attached to F(0) by a central stalk formed by the gamma and epsilon chains, while a peripheral stalk is formed by the delta and b chains.

It localises to the cell inner membrane. F(1)F(0) ATP synthase produces ATP from ADP in the presence of a proton or sodium gradient. F-type ATPases consist of two structural domains, F(1) containing the extramembraneous catalytic core and F(0) containing the membrane proton channel, linked together by a central stalk and a peripheral stalk. During catalysis, ATP synthesis in the catalytic domain of F(1) is coupled via a rotary mechanism of the central stalk subunits to proton translocation. In terms of biological role, this protein is part of the stalk that links CF(0) to CF(1). It either transmits conformational changes from CF(0) to CF(1) or is implicated in proton conduction. In Neisseria meningitidis serogroup C (strain 053442), this protein is ATP synthase subunit delta.